Reading from the N-terminus, the 426-residue chain is Serine hydroxymethyltransferase 1 (426 aa).

(6S)-5,6,7,8-tetrahydrofolate contacts are provided by residues L121 and 125-127; that span reads GHL. Position 230 is an N6-(pyridoxal phosphate)lysine (K230). (6S)-5,6,7,8-tetrahydrofolate is bound at residue 355–357; sequence SPF.

Belongs to the SHMT family. In terms of assembly, homodimer. Pyridoxal 5'-phosphate is required as a cofactor.

The protein resides in the cytoplasm. It carries out the reaction (6R)-5,10-methylene-5,6,7,8-tetrahydrofolate + glycine + H2O = (6S)-5,6,7,8-tetrahydrofolate + L-serine. The protein operates within one-carbon metabolism; tetrahydrofolate interconversion. It participates in amino-acid biosynthesis; glycine biosynthesis; glycine from L-serine: step 1/1. Its function is as follows. Catalyzes the reversible interconversion of serine and glycine with tetrahydrofolate (THF) serving as the one-carbon carrier. This reaction serves as the major source of one-carbon groups required for the biosynthesis of purines, thymidylate, methionine, and other important biomolecules. Also exhibits THF-independent aldolase activity toward beta-hydroxyamino acids, producing glycine and aldehydes, via a retro-aldol mechanism. The polypeptide is Serine hydroxymethyltransferase 1 (Hahella chejuensis (strain KCTC 2396)).